The following is a 140-amino-acid chain: L-fucose mutarotase (140 aa).

His-22 serves as the catalytic Proton donor. Substrate-binding positions include Asp-30, Arg-107, and 129–131; that span reads YGN.

It belongs to the RbsD / FucU family. FucU mutarotase subfamily. Homodecamer.

The protein resides in the cytoplasm. The catalysed reaction is alpha-L-fucose = beta-L-fucose. The protein operates within carbohydrate metabolism; L-fucose metabolism. Its function is as follows. Involved in the anomeric conversion of L-fucose. This Salmonella paratyphi B (strain ATCC BAA-1250 / SPB7) protein is L-fucose mutarotase.